Here is a 342-residue protein sequence, read N- to C-terminus: Probable tyrosine--tRNA ligase, cytoplasmic (342 aa).

Tyr48 serves as a coordination point for L-tyrosine. A 'HIGH' region motif is present at residues 53–61; it reads ITGKPHIGY. Tyr175, Gln179, Asp182, and Gln197 together coordinate L-tyrosine. The 'KMSKS' region signature appears at 231-235; the sequence is KMSSS.

It belongs to the class-I aminoacyl-tRNA synthetase family. Homodimer.

The protein resides in the cytoplasm. The enzyme catalyses tRNA(Tyr) + L-tyrosine + ATP = L-tyrosyl-tRNA(Tyr) + AMP + diphosphate + H(+). The chain is Probable tyrosine--tRNA ligase, cytoplasmic from Enterocytozoon bieneusi (strain H348) (Microsporidian parasite).